Consider the following 1171-residue polypeptide: MSLRFVIGRAGSGKSTLCLHEVQEELKQRPRGETILYLVPEQMTFQTQQALIGSEDVRGSIRAQVFSFSRLAWKVLQEVGGASRLHIDEAGVHMLLRKIVESRKDGLSVFQKAAEQNGFFEHLGSMIAEFKRYNVTPSNVYEMWQQLDAHSSSAEQKLLANKVYDLQLLYDDFERALIGKYLDSEDYLQLLVEKLPQSEYVKGAEIYIDGFHSFSPQELEIVRQLMICGARVTITLTIDEKTLAQPVNELDLFYETTLTYEKIKQVAREEKIEIEKTIPLMEQPRFHSPALAHLEAHYEARPNEKFNGEASVTIHTAANLRAEVEGVAREIRRLVAEENYRYRDVAVLLRNGESYYDVMRTLFTDYNIPHFIDEKRPMSHHPLVECIRSALEIISGNWRYDAVFRCVKTELLYPLDVRKETMREEMDEFENYCLAYGVQGKRWTSEDPWMYRRYRSLDDTNGMITDSEREMEEKINRLRDVVRTPVIRMQKRLKRAGTVMQMCEAVYLFLEELDVPKKLEALRIRAEESGDFLFATDHEQVWEEVMNLLDTFVEMLGEEKMSLSMFTDVMSTGLEALQFANIPPSLDQVLIANIDRSRLSNVKATFVIGVNEGVIPAAPMDEGMLSDEERDVLSAAGIELAPTTRQTLLEEQFVMYQMVTRATEKLYISCPLADEEGKTLLASSFIKKIKRMFPDVKDTFITNDVNDLSRSEQISFVATPEVTLSYVMQQLQTWKRYGFEGNLDFWWDVYNFYVTSDEWKQKSSRVLSSLFYRNRAQKLSTAVSRDLYGDKIKGSVSRMELFNRCAYAHFAQHGLSLRERDIFKLDAPDIGELFHAALKRIADRLLRENRTWADLSIKECEHLSTVVIEEIAPLLQRQILLSSNRHFYLKQKLQQIIFRTSIILREHAKSSGFVPVDLEVPFGMGGTGSLPPMEFSLPNGVKMEVVGRIDRVDKAEDENGTFLRIIDYKSSSKALDLTEVYYGLALQMLTYLDVVTSNAHTWMKKGHAASPAGVLYFHIHNPIVEVKGDASEAEIEKEILKKFKMKGLVLGDADVVRLMDNKLSTGSSDIISAGLKKDGSFSARSSIASEQEFNVLQKYVHHTFENIGKDITEGVIDIAPYKKGNKAACTFCNFKSVCQFDESLEDNQFRTLKDMKDSEAMEKIREEVGGE.

The UvrD-like helicase ATP-binding domain occupies 1-343 (MSLRFVIGRA…LVAEENYRYR (343 aa)). 8–15 (GRAGSGKS) provides a ligand contact to ATP. A UvrD-like helicase C-terminal domain is found at 281–587 (MEQPRFHSPA…QFANIPPSLD (307 aa)). Positions 805, 1129, 1132, and 1138 each coordinate [4Fe-4S] cluster.

Belongs to the helicase family. AddB/RexB type 1 subfamily. As to quaternary structure, heterodimer of AddA and AddB. It depends on Mg(2+) as a cofactor. Requires [4Fe-4S] cluster as cofactor.

The heterodimer acts as both an ATP-dependent DNA helicase and an ATP-dependent, dual-direction single-stranded exonuclease. Recognizes the chi site generating a DNA molecule suitable for the initiation of homologous recombination. The AddB subunit has 5' -&gt; 3' nuclease activity but not helicase activity. In Bacillus thuringiensis subsp. konkukian (strain 97-27), this protein is ATP-dependent helicase/deoxyribonuclease subunit B.